A 683-amino-acid polypeptide reads, in one-letter code: DNA ligase 2 (683 aa).

NAD(+) is bound by residues 27 to 31, 76 to 77, and E106; these read DGEFD and SL. The N6-AMP-lysine intermediate role is filled by K108. Positions 129, 169, 285, and 309 each coordinate NAD(+). Zn(2+)-binding residues include C403, C406, C422, and C428. Residues 592 to 681 form the BRCT domain; that stretch reads SIERTLEGLS…PAAVAAEEPE (90 aa).

It belongs to the NAD-dependent DNA ligase family. LigA subfamily. Requires Mg(2+) as cofactor. Mn(2+) is required as a cofactor.

The catalysed reaction is NAD(+) + (deoxyribonucleotide)n-3'-hydroxyl + 5'-phospho-(deoxyribonucleotide)m = (deoxyribonucleotide)n+m + AMP + beta-nicotinamide D-nucleotide.. DNA ligase that catalyzes the formation of phosphodiester linkages between 5'-phosphoryl and 3'-hydroxyl groups in double-stranded DNA using NAD as a coenzyme and as the energy source for the reaction. It is essential for DNA replication and repair of damaged DNA. The sequence is that of DNA ligase 2 from Nocardia farcinica (strain IFM 10152).